The chain runs to 354 residues: Pyruvate dehydrogenase E1 component subunit alpha (354 aa).

A disordered region spans residues 1 to 29; it reads MAKATQDSNRPHKADVGSAIPNHDLPPIP.

Heterodimer of an alpha and a beta chain. Thiamine diphosphate serves as cofactor.

The catalysed reaction is N(6)-[(R)-lipoyl]-L-lysyl-[protein] + pyruvate + H(+) = N(6)-[(R)-S(8)-acetyldihydrolipoyl]-L-lysyl-[protein] + CO2. Functionally, the pyruvate dehydrogenase complex catalyzes the overall conversion of pyruvate to acetyl-CoA and CO(2). It contains multiple copies of three enzymatic components: pyruvate dehydrogenase (E1), dihydrolipoamide acetyltransferase (E2) and lipoamide dehydrogenase (E3). The chain is Pyruvate dehydrogenase E1 component subunit alpha (pdhA) from Zymomonas mobilis subsp. mobilis (strain ATCC 31821 / ZM4 / CP4).